The chain runs to 114 residues: Ribonuclease P protein component (114 aa).

Belongs to the RnpA family. In terms of assembly, consists of a catalytic RNA component (M1 or rnpB) and a protein subunit.

It carries out the reaction Endonucleolytic cleavage of RNA, removing 5'-extranucleotides from tRNA precursor.. In terms of biological role, RNaseP catalyzes the removal of the 5'-leader sequence from pre-tRNA to produce the mature 5'-terminus. It can also cleave other RNA substrates such as 4.5S RNA. The protein component plays an auxiliary but essential role in vivo by binding to the 5'-leader sequence and broadening the substrate specificity of the ribozyme. The chain is Ribonuclease P protein component from Borrelia duttonii (strain Ly).